Reading from the N-terminus, the 453-residue chain is Tetrahydroanabasine acetyltransferase (453 aa).

Active-site proton acceptor residues include histidine 163 and aspartate 388.

The protein belongs to the plant acyltransferase family. As to quaternary structure, monomer.

It catalyses the reaction tetrahydroanabasine + acetyl-CoA = ammodendrine + CoA. It functions in the pathway alkaloid biosynthesis. Its function is as follows. Tetrahydroanabasine acetyltransferase involved in the accumulation of quinolizidine type antinutritional alkaloids (QAs). QAs impart a bitter taste to plants, acting as repellents and toxicants for herbivores and predators, and possess a variety of pharmacological effects, including sedative, anticonvulsant, anti-inflammatory, antiviral, antitumor, antipyretic, anti-hepatitis B, antifibrotic, antiallergic, antidiarrheal, analgesic and antimicrobial activities. Mediates the conversion of tetrahydroanabasine into ammodendrine. The chain is Tetrahydroanabasine acetyltransferase from Lupinus angustifolius (Narrow-leaved blue lupine).